The primary structure comprises 147 residues: UPF0251 protein NT01CX_1491 (147 aa).

This sequence belongs to the UPF0251 family.

The protein is UPF0251 protein NT01CX_1491 of Clostridium novyi (strain NT).